The chain runs to 114 residues: Probable 4-amino-4-deoxy-L-arabinose-phosphoundecaprenol flippase subunit ArnE (114 aa).

The next 3 helical transmembrane spans lie at 38–58 (LTLR…LLWL), 64–84 (LPLS…TLAA), and 94–114 (LRHW…SWHL). The EamA domain occupies 43 to 112 (LAIAVVSLGL…IIFGILLMSW (70 aa)).

It belongs to the ArnE family. Heterodimer of ArnE and ArnF.

It is found in the cell inner membrane. It functions in the pathway bacterial outer membrane biogenesis; lipopolysaccharide biosynthesis. Translocates 4-amino-4-deoxy-L-arabinose-phosphoundecaprenol (alpha-L-Ara4N-phosphoundecaprenol) from the cytoplasmic to the periplasmic side of the inner membrane. In Yersinia pseudotuberculosis serotype O:1b (strain IP 31758), this protein is Probable 4-amino-4-deoxy-L-arabinose-phosphoundecaprenol flippase subunit ArnE.